Consider the following 627-residue polypeptide: 1-deoxy-D-xylulose-5-phosphate synthase (627 aa).

Residues His76 and 117–119 contribute to the thiamine diphosphate site; that span reads SHA. Residue Asp148 participates in Mg(2+) binding. Thiamine diphosphate contacts are provided by residues 149-150, Asn178, Phe288, and Glu370; that span reads GA. A Mg(2+)-binding site is contributed by Asn178.

This sequence belongs to the transketolase family. DXPS subfamily. Homodimer. Mg(2+) is required as a cofactor. Thiamine diphosphate serves as cofactor.

It carries out the reaction D-glyceraldehyde 3-phosphate + pyruvate + H(+) = 1-deoxy-D-xylulose 5-phosphate + CO2. It participates in metabolic intermediate biosynthesis; 1-deoxy-D-xylulose 5-phosphate biosynthesis; 1-deoxy-D-xylulose 5-phosphate from D-glyceraldehyde 3-phosphate and pyruvate: step 1/1. Catalyzes the acyloin condensation reaction between C atoms 2 and 3 of pyruvate and glyceraldehyde 3-phosphate to yield 1-deoxy-D-xylulose-5-phosphate (DXP). The protein is 1-deoxy-D-xylulose-5-phosphate synthase of Cutibacterium acnes (strain DSM 16379 / KPA171202) (Propionibacterium acnes).